A 422-amino-acid chain; its full sequence is 5-hydroxytryptamine receptor 1A (422 aa).

At 1 to 38 (MDVLGPGQGNNTTSSEGPFGTRANATGISDVTFSYQVI) the chain is on the extracellular side. N10, N11, and N24 each carry an N-linked (GlcNAc...) asparagine glycan. The chain crosses the membrane as a helical span at residues 39 to 59 (TSLLLGTLIFCAVLGNACVVA). At 60–73 (AIALERSLQNVANY) the chain is on the cytoplasmic side. The chain crosses the membrane as a helical span at residues 74–98 (LIGSLAVTDLMVSVLVLPMAALYQV). Topologically, residues 99–107 (LNKWTLGQV) are extracellular. A helical transmembrane segment spans residues 108–132 (TCDLFIALDVLCCTSSILHLCAIAL). C109 and C187 are disulfide-bonded. The serotonin site is built by D116 and C120. A DRY motif; important for ligand-induced conformation changes motif is present at residues 133–135 (DRY). Residues 133–152 (DRYWAITDPIDYVNKRTPRR) are Cytoplasmic-facing. A helical membrane pass occupies residues 153 to 174 (AAALISLTWLVGFLISIPPMLG). Residues 175-193 (WRTPEDRSDPDACTISKDH) are Extracellular-facing. Residues 194-216 (GYTIYSTFGAFYIPLLLMLVLYG) traverse the membrane as a helical segment. Residues 217-346 (RIFRAARFRI…LARERKTVKT (130 aa)) lie on the Cytoplasmic side of the membrane. Positions 237-262 (GADSRLGASPAPQRKKSANGELGSRE) are disordered. 1D-myo-inositol 4-phosphate contacts are provided by K345, T346, and G352. Residues 347–370 (LGIIMGTFILCWLPFFIVALVLPF) traverse the membrane as a helical segment. The Extracellular segment spans residues 371–378 (CESSCHMP). A helical transmembrane segment spans residues 379–403 (TLLGAIINWLGYSNSLLNPVIYAYF). The short motif at 396-400 (NPVIY) is the NPxxY motif; important for ligand-induced conformation changes and signaling element. Positions 403, 404, and 405 each coordinate 1D-myo-inositol 4-phosphate. The Cytoplasmic portion of the chain corresponds to 404 to 422 (NKDFQNAFKKILKCKFCRR).

It belongs to the G-protein coupled receptor 1 family. 5-hydroxytryptamine receptor subfamily. HTR1A sub-subfamily. Heterodimer; heterodimerizes with GPER1. Interacts with YIF1B. Interacts with GPR39 and GALR1.

The protein localises to the cell membrane. The protein resides in the cell projection. It is found in the dendrite. G-protein coupled receptor activity is regulated by lipids: phosphatidylinositol 4-phosphate increases HTR1A-mediated activity. In terms of biological role, G-protein coupled receptor for 5-hydroxytryptamine (serotonin). Also functions as a receptor for various drugs and psychoactive substances. Ligand binding causes a conformation change that triggers signaling via guanine nucleotide-binding proteins (G proteins) and modulates the activity of downstream effectors, such as adenylate cyclase. HTR1A is coupled to G(i)/G(o) G alpha proteins and mediates inhibitory neurotransmission: signaling inhibits adenylate cyclase activity and activates a phosphatidylinositol-calcium second messenger system that regulates the release of Ca(2+) ions from intracellular stores. Beta-arrestin family members regulate signaling by mediating both receptor desensitization and resensitization processes. The chain is 5-hydroxytryptamine receptor 1A (HTR1A) from Equus caballus (Horse).